A 528-amino-acid chain; its full sequence is Cytochrome P450 monooxygenase vrcB (528 aa).

Residues 5-27 form a helical membrane-spanning segment; it reads YGLFFAAVALYSVALVIYRLYLH. Residue Cys-470 coordinates heme.

The protein belongs to the cytochrome P450 family. Requires heme as cofactor.

The protein resides in the membrane. The catalysed reaction is variecoladiene + 4 reduced [NADPH--hemoprotein reductase] + 4 O2 = variecolin + 4 oxidized [NADPH--hemoprotein reductase] + 6 H2O + 4 H(+). It participates in secondary metabolite biosynthesis; terpenoid biosynthesis. Cytochrome P450 monooxygenase; part of the gene cluster that mediates the biosynthesis of the sesterterpene variecolin. The first step in the pathway is performed by the variecoladiene synthase vrcA that possesses both prenyl transferase and terpene cyclase activity, converting isopentenyl diphosphate and dimethylallyl diphosphate into geranylfarnesyl pyrophosphate (GFPP) and then converting GFPP into the tetracyclic variecoladiene. The cytochrome P450 monooxygenase vrcB then catalyzes multiple oxidations at C-5 and C-20 positions to yield variecolin. The protein is Cytochrome P450 monooxygenase vrcB of Aspergillus aculeatus (strain ATCC 16872 / CBS 172.66 / WB 5094).